A 340-amino-acid chain; its full sequence is Fructose-1,6-bisphosphatase class 1 (340 aa).

Residues Glu107, Asp126, Leu128, and Asp129 each coordinate Mg(2+). Substrate is bound at residue Asn215. A Mg(2+)-binding site is contributed by Glu287.

It belongs to the FBPase class 1 family. Homotetramer. The cofactor is Mg(2+).

The protein localises to the cytoplasm. It carries out the reaction beta-D-fructose 1,6-bisphosphate + H2O = beta-D-fructose 6-phosphate + phosphate. It participates in carbohydrate biosynthesis; gluconeogenesis. In Brucella canis (strain ATCC 23365 / NCTC 10854 / RM-666), this protein is Fructose-1,6-bisphosphatase class 1.